The sequence spans 387 residues: Zinc transporter 7 (387 aa).

Topologically, residues 1–37 (MLPLSIKDDEYKPAKFNLVVKLSGWFRSILADKTSRN) are cytoplasmic. The chain crosses the membrane as a helical span at residues 38–58 (LFFFLCLNLSFAFVELLYGIW). Residues 59 to 67 (SNSLGLISD) are Lumenal-facing. A helical transmembrane segment spans residues 68-88 (SFHMFFDCTALLAGLAASVIS). Over 89–102 (RWRSNDSFSYGYVR) the chain is Cytoplasmic. A helical membrane pass occupies residues 103 to 123 (AEVLAGFVNGLFLIFTAFFIF). Topologically, residues 124–140 (SEGVERALEPPDVHHDR) are lumenal. A helical transmembrane segment spans residues 141–161 (LLPVSIAGLLVNLVGIFVFQH). The segment at 161–232 (HGGHGHSHGG…HDDQHCHDDH (72 aa)) is his-rich loop. Residues 162–247 (GGHGHSHGGD…KGSSKQILQG (86 aa)) lie on the Cytoplasmic side of the membrane. The tract at residues 167–237 (SHGGDDHGHS…CHDDHTLTPG (71 aa)) is disordered. Positions 187-201 (GHSHGGHGHSHGGHG) are enriched in basic residues. 2 stretches are compositionally biased toward basic and acidic residues: residues 202 to 214 (HSHESKHGHDHGH) and 221 to 233 (HSHDDQHCHDDHT). A helical transmembrane segment spans residues 248–268 (VFLHIVADTLGSVGVIISAIL). The Lumenal segment spans residues 269–273 (MQKYD). The helical transmembrane segment at 274-294 (LMIADPICSMLIALLIGVSVV) threads the bilayer. Residues 295–387 (PLLRESIGIL…LYVQIEVAAM (93 aa)) are Cytoplasmic-facing.

It belongs to the cation diffusion facilitator (CDF) transporter (TC 2.A.4) family. SLC30A subfamily. Homooligomer.

Its subcellular location is the golgi apparatus membrane. The protein localises to the cytoplasmic vesicle. It is found in the golgi apparatus. It localises to the trans-Golgi network. The protein resides in the sarcoplasmic reticulum. Its subcellular location is the mitochondrion. The enzyme catalyses Zn(2+)(in) = Zn(2+)(out). Its function is as follows. Zinc ion transporter mediating zinc entry from the cytosol into the lumen of organelles along the secretory pathway. By contributing to zinc ion homeostasis within the early secretory pathway, regulates the activation and folding of enzymes like alkaline phosphatases. This Danio rerio (Zebrafish) protein is Zinc transporter 7 (slc30a7).